Reading from the N-terminus, the 361-residue chain is MDNSYKIKVQHVTKEYDLYKSQAEKLRSFFSLSNSKVPHFWSLMGISLEVKAGETLGLIGVNGSGKSTLSNIISGIIPQTTGTVEVRGDTSIIAIGAGLRGNLTGLENIRLKALMQGLTNPEIDALMDDIVSFADIGDFLYQPVKSYSSGMKSRLGFSIAVHVNPDILIIDEALSVGDDTFYQKCVDKISEFKDEGKTIVFVSHSLKQIEILCDRVAWIHYGTLKEIGATETVVKHYREFTKWFKGQSKKEKKHFQRQMKANQKAFDIDAYQQQVIEERQANDPNDQNVAAEVKKDFYGSVISEKMSWGNRFLTIAVGIVFVLACLINVSGHSLGDVLQNPGNIVHPETVLHDTNATSGVK.

Residues 13-246 form the ABC transporter domain; that stretch reads TKEYDLYKSQ…YREFTKWFKG (234 aa). Position 60–67 (60–67) interacts with ATP; it reads GVNGSGKS. Positions 247-361 are unknown; that stretch reads QSKKEKKHFQ…HDTNATSGVK (115 aa).

Belongs to the ABC transporter superfamily. Teichoic acids exporter (TC 3.A.1.104.1) family. The complex is composed of two ATP-binding proteins (TagH) and two transmembrane proteins (TagG).

The protein resides in the cell membrane. It carries out the reaction ATP + H2O + teichoic acidSide 1 = ADP + phosphate + teichoic acidSide 2.. Part of the ABC transporter complex TagGH involved in teichoic acids export. Responsible for energy coupling to the transport system. This chain is Teichoic acids export ATP-binding protein TagH, found in Levilactobacillus brevis (strain ATCC 367 / BCRC 12310 / CIP 105137 / JCM 1170 / LMG 11437 / NCIMB 947 / NCTC 947) (Lactobacillus brevis).